We begin with the raw amino-acid sequence, 622 residues long: DNA polymerase II small subunit (622 aa).

A disordered region spans residues 76-113; the sequence is ISTGEGSQKVPDHEELEKITNESSVESSISTGETPKTE. Residues 85–95 show a composition bias toward basic and acidic residues; the sequence is VPDHEELEKIT. Positions 96–109 are enriched in polar residues; sequence NESSVESSISTGET.

This sequence belongs to the DNA polymerase delta/II small subunit family. Heterodimer of a large subunit and a small subunit.

It carries out the reaction DNA(n) + a 2'-deoxyribonucleoside 5'-triphosphate = DNA(n+1) + diphosphate. The enzyme catalyses Exonucleolytic cleavage in the 3'- to 5'-direction to yield nucleoside 5'-phosphates.. Its function is as follows. Possesses two activities: a DNA synthesis (polymerase) and an exonucleolytic activity that degrades single-stranded DNA in the 3' to 5' direction. Has a template-primer preference which is characteristic of a replicative DNA polymerase. In Pyrococcus horikoshii (strain ATCC 700860 / DSM 12428 / JCM 9974 / NBRC 100139 / OT-3), this protein is DNA polymerase II small subunit (polB).